Reading from the N-terminus, the 103-residue chain is Regulator of rDNA transcription protein 1 (103 aa).

Helical transmembrane passes span 9–33 (FLPS…WVLV) and 40–57 (VAFI…YTFF).

Its subcellular location is the membrane. Its function is as follows. Identified in a screen for mutants with decreased levels of rDNA transcription. The polypeptide is Regulator of rDNA transcription protein 1 (RRT1) (Saccharomyces cerevisiae (strain ATCC 204508 / S288c) (Baker's yeast)).